Reading from the N-terminus, the 66-residue chain is Large ribosomal subunit protein bL33c (66 aa).

Belongs to the bacterial ribosomal protein bL33 family.

The protein resides in the plastid. It localises to the chloroplast. This is Large ribosomal subunit protein bL33c from Liriodendron tulipifera (Tuliptree).